Reading from the N-terminus, the 74-residue chain is Cytochrome b (74 aa).

The chain crosses the membrane as a helical span at residues 34–54; it reads FGSLLAICLVTQILTGLLLAM.

Belongs to the cytochrome b family. In terms of assembly, the cytochrome bc1 complex contains 11 subunits: 3 respiratory subunits (MT-CYB, CYC1 and UQCRFS1), 2 core proteins (UQCRC1 and UQCRC2) and 6 low-molecular weight proteins (UQCRH/QCR6, UQCRB/QCR7, UQCRQ/QCR8, UQCR10/QCR9, UQCR11/QCR10 and a cleavage product of UQCRFS1). This cytochrome bc1 complex then forms a dimer. Heme is required as a cofactor.

The protein localises to the mitochondrion inner membrane. In terms of biological role, component of the ubiquinol-cytochrome c reductase complex (complex III or cytochrome b-c1 complex) that is part of the mitochondrial respiratory chain. The b-c1 complex mediates electron transfer from ubiquinol to cytochrome c. Contributes to the generation of a proton gradient across the mitochondrial membrane that is then used for ATP synthesis. The sequence is that of Cytochrome b (MT-CYB) from Anser caerulescens (Snow goose).